A 193-amino-acid polypeptide reads, in one-letter code: Holliday junction branch migration complex subunit RuvA (193 aa).

The domain I stretch occupies residues 1–64 (MIGRIAGILL…EDAHLLYGFL (64 aa)). Positions 65–139 (TPQERTTFRE…GKLGADLGAL (75 aa)) are domain II. Residues 139-143 (LAGAA) form a flexible linker region. Positions 144 to 193 (SPSDHAADILNALVALGYSEKEGLAAIKNVPAGTGVSDGIKLALKALSKA) are domain III.

The protein belongs to the RuvA family. In terms of assembly, homotetramer. Forms an RuvA(8)-RuvB(12)-Holliday junction (HJ) complex. HJ DNA is sandwiched between 2 RuvA tetramers; dsDNA enters through RuvA and exits via RuvB. An RuvB hexamer assembles on each DNA strand where it exits the tetramer. Each RuvB hexamer is contacted by two RuvA subunits (via domain III) on 2 adjacent RuvB subunits; this complex drives branch migration. In the full resolvosome a probable DNA-RuvA(4)-RuvB(12)-RuvC(2) complex forms which resolves the HJ.

Its subcellular location is the cytoplasm. Its function is as follows. The RuvA-RuvB-RuvC complex processes Holliday junction (HJ) DNA during genetic recombination and DNA repair, while the RuvA-RuvB complex plays an important role in the rescue of blocked DNA replication forks via replication fork reversal (RFR). RuvA specifically binds to HJ cruciform DNA, conferring on it an open structure. The RuvB hexamer acts as an ATP-dependent pump, pulling dsDNA into and through the RuvAB complex. HJ branch migration allows RuvC to scan DNA until it finds its consensus sequence, where it cleaves and resolves the cruciform DNA. This Burkholderia vietnamiensis (strain G4 / LMG 22486) (Burkholderia cepacia (strain R1808)) protein is Holliday junction branch migration complex subunit RuvA.